The following is a 128-amino-acid chain: RutC family protein BUsg_359 (128 aa).

The protein belongs to the RutC family.

In Buchnera aphidicola subsp. Schizaphis graminum (strain Sg), this protein is RutC family protein BUsg_359.